The sequence spans 137 residues: NADH-ubiquinone oxidoreductase chain 3 (137 aa).

Transmembrane regions (helical) follow at residues 6-26 (LFILFVSIIALLFLFINLIFA), 57-77 (FFIFALVYLLLDLEILLTFPF), and 86-106 (IYGLIILLGFITIITIGFVYE).

It belongs to the complex I subunit 3 family.

Its subcellular location is the mitochondrion membrane. It catalyses the reaction a ubiquinone + NADH + 5 H(+)(in) = a ubiquinol + NAD(+) + 4 H(+)(out). Core subunit of the mitochondrial membrane respiratory chain NADH dehydrogenase (Complex I) that is believed to belong to the minimal assembly required for catalysis. Complex I functions in the transfer of electrons from NADH to the respiratory chain. The immediate electron acceptor for the enzyme is believed to be ubiquinone. In Podospora anserina (strain S / ATCC MYA-4624 / DSM 980 / FGSC 10383) (Pleurage anserina), this protein is NADH-ubiquinone oxidoreductase chain 3 (ND3).